The chain runs to 129 residues: MRFRSQRAVCRSRNYSMYCCSRVFVRNPRLDRRYPQVKILAKLHFFFHFFFSFLLHLISPAVTGGITRAPFLCLGPRVPLFRLERPLHAARTSRRCAGAASVSVDGATVEAPPLWTASCRTTPQVRARA.

The helical transmembrane segment at phenylalanine 46–isoleucine 66 threads the bilayer.

The protein resides in the membrane. This is an uncharacterized protein from Saccharomyces cerevisiae (strain ATCC 204508 / S288c) (Baker's yeast).